The chain runs to 809 residues: Lon protease (809 aa).

The Lon N-terminal domain occupies 8–203; it reads LPVVALRNMA…RLCLILADEI (196 aa). 354–361 contacts ATP; sequence GPPGTGKT. One can recognise a Lon proteolytic domain in the interval 629–809; the sequence is KDEVGIVCGL…MDEVLKHALV (181 aa). Active-site residues include S716 and K759.

The protein belongs to the peptidase S16 family. As to quaternary structure, homohexamer. Organized in a ring with a central cavity.

It localises to the cytoplasm. The catalysed reaction is Hydrolysis of proteins in presence of ATP.. In terms of biological role, ATP-dependent serine protease that mediates the selective degradation of mutant and abnormal proteins as well as certain short-lived regulatory proteins. Required for cellular homeostasis and for survival from DNA damage and developmental changes induced by stress. Degrades polypeptides processively to yield small peptide fragments that are 5 to 10 amino acids long. Binds to DNA in a double-stranded, site-specific manner. This is Lon protease from Lachnoclostridium phytofermentans (strain ATCC 700394 / DSM 18823 / ISDg) (Clostridium phytofermentans).